The following is a 300-amino-acid chain: MATKRAHPEDETHESKRAAQETQLLPYNGSGFLMQVENDGALRKFTPINAMRAQQNLSWQCLVLLNCQALDFSAINFHYGDLQYLKDKFTELQNLSNYYEWRKQERPEDKVCIMEAAVGKCTYTIGLRVKGRPNGFAIAEFGSVHRSKSTFGQFLSTTWSAIHEHNSVFGKIMDSYYKHEYPLKLESSVCVHLPEKDYEREIKARQFLWVRRDNNPELYATGQLDRPLEVAPMTLAEFDRLFEVNKTDGPSQEVPVLVCGRIDGVKYGKEIQMTDVNGRKFSEKPYSLAFKPVLYLILEP.

The segment covering 1–19 (MATKRAHPEDETHESKRAA) has biased composition (basic and acidic residues). Residues 1 to 20 (MATKRAHPEDETHESKRAAQ) form a disordered region.

This is an uncharacterized protein from Orgyia pseudotsugata multicapsid polyhedrosis virus (OpMNPV).